We begin with the raw amino-acid sequence, 139 residues long: uncharacterized protein (139 aa).

The region spanning 1-62 (MDDTDLQILS…NICYEKLNKH (62 aa)) is the HTH asnC-type domain. Residues 20 to 39 (MVELGKLVGLSSPSAAERVR) constitute a DNA-binding region (H-T-H motif).

This is an uncharacterized protein from Bacillus subtilis (strain 168).